An 88-amino-acid polypeptide reads, in one-letter code: Cell division topological specificity factor (88 aa).

Belongs to the MinE family.

Prevents the cell division inhibition by proteins MinC and MinD at internal division sites while permitting inhibition at polar sites. This ensures cell division at the proper site by restricting the formation of a division septum at the midpoint of the long axis of the cell. The chain is Cell division topological specificity factor from Citrobacter koseri (strain ATCC BAA-895 / CDC 4225-83 / SGSC4696).